The primary structure comprises 899 residues: Bifunctional uridylyltransferase/uridylyl-removing enzyme (899 aa).

The segment at 1–342 is uridylyltransferase; sequence MPQVDPDLFD…PGDAAGRVEP (342 aa). The tract at residues 343–705 is uridylyl-removing; the sequence is LNERFQVRDG…TTQREFEGAT (363 aa). In terms of domain architecture, HD spans 461–583; the sequence is VDAHTLNLIK…VRDQTYLDYL (123 aa). ACT domains follow at residues 706-789 and 816-899; these read QIFI…IIQR and ILEI…RISI.

The protein belongs to the GlnD family. It depends on Mg(2+) as a cofactor.

It catalyses the reaction [protein-PII]-L-tyrosine + UTP = [protein-PII]-uridylyl-L-tyrosine + diphosphate. The catalysed reaction is [protein-PII]-uridylyl-L-tyrosine + H2O = [protein-PII]-L-tyrosine + UMP + H(+). With respect to regulation, uridylyltransferase (UTase) activity is inhibited by glutamine, while glutamine activates uridylyl-removing (UR) activity. Its function is as follows. Modifies, by uridylylation and deuridylylation, the PII regulatory proteins (GlnB and homologs), in response to the nitrogen status of the cell that GlnD senses through the glutamine level. Under low glutamine levels, catalyzes the conversion of the PII proteins and UTP to PII-UMP and PPi, while under higher glutamine levels, GlnD hydrolyzes PII-UMP to PII and UMP (deuridylylation). Thus, controls uridylylation state and activity of the PII proteins, and plays an important role in the regulation of nitrogen fixation and metabolism. This chain is Bifunctional uridylyltransferase/uridylyl-removing enzyme, found in Azotobacter vinelandii (strain DJ / ATCC BAA-1303).